A 202-amino-acid chain; its full sequence is Large ribosomal subunit protein uL13 (202 aa).

This sequence belongs to the universal ribosomal protein uL13 family. Component of the large ribosomal subunit (LSU). Mature N.crassa ribosomes consist of a small (40S) and a large (60S) subunit. The 40S small subunit contains 1 molecule of ribosomal RNA (18S rRNA) and at least 32 different proteins. The large 60S subunit contains 3 rRNA molecules (26S, 5.8S and 5S rRNA) and at least 42 different proteins.

It is found in the cytoplasm. In terms of biological role, component of the ribosome, a large ribonucleoprotein complex responsible for the synthesis of proteins in the cell. The small ribosomal subunit (SSU) binds messenger RNAs (mRNAs) and translates the encoded message by selecting cognate aminoacyl-transfer RNA (tRNA) molecules. The large subunit (LSU) contains the ribosomal catalytic site termed the peptidyl transferase center (PTC), which catalyzes the formation of peptide bonds, thereby polymerizing the amino acids delivered by tRNAs into a polypeptide chain. The nascent polypeptides leave the ribosome through a tunnel in the LSU and interact with protein factors that function in enzymatic processing, targeting, and the membrane insertion of nascent chains at the exit of the ribosomal tunnel. This is Large ribosomal subunit protein uL13 (crp-46) from Neurospora crassa (strain ATCC 24698 / 74-OR23-1A / CBS 708.71 / DSM 1257 / FGSC 987).